Here is a 496-residue protein sequence, read N- to C-terminus: Lysine--tRNA ligase (496 aa).

Mg(2+) is bound by residues E409 and E416.

Belongs to the class-II aminoacyl-tRNA synthetase family. In terms of assembly, homodimer. Requires Mg(2+) as cofactor.

Its subcellular location is the cytoplasm. The enzyme catalyses tRNA(Lys) + L-lysine + ATP = L-lysyl-tRNA(Lys) + AMP + diphosphate. This Streptococcus thermophilus (strain ATCC BAA-491 / LMD-9) protein is Lysine--tRNA ligase.